We begin with the raw amino-acid sequence, 294 residues long: Probable 2-(5''-triphosphoribosyl)-3'-dephosphocoenzyme-A synthase (294 aa).

Belongs to the CitG/MdcB family.

The catalysed reaction is 3'-dephospho-CoA + ATP = 2'-(5''-triphospho-alpha-D-ribosyl)-3'-dephospho-CoA + adenine. In Streptococcus pyogenes serotype M5 (strain Manfredo), this protein is Probable 2-(5''-triphosphoribosyl)-3'-dephosphocoenzyme-A synthase.